Reading from the N-terminus, the 257-residue chain is Adenosylcobinamide-GDP ribazoletransferase (257 aa).

The next 6 helical transmembrane spans lie at 4 to 24, 40 to 60, 64 to 84, 116 to 136, 140 to 160, and 193 to 213; these read AVRG…WWLG, VVGL…QWFF, FVVQ…LLHL, AAVA…AALL, AALA…ALLI, and LFVT…VVAV.

Belongs to the CobS family. The cofactor is Mg(2+).

It is found in the cell inner membrane. The enzyme catalyses alpha-ribazole + adenosylcob(III)inamide-GDP = adenosylcob(III)alamin + GMP + H(+). It carries out the reaction alpha-ribazole 5'-phosphate + adenosylcob(III)inamide-GDP = adenosylcob(III)alamin 5'-phosphate + GMP + H(+). It functions in the pathway cofactor biosynthesis; adenosylcobalamin biosynthesis; adenosylcobalamin from cob(II)yrinate a,c-diamide: step 7/7. Joins adenosylcobinamide-GDP and alpha-ribazole to generate adenosylcobalamin (Ado-cobalamin). Also synthesizes adenosylcobalamin 5'-phosphate from adenosylcobinamide-GDP and alpha-ribazole 5'-phosphate. In Alkalilimnicola ehrlichii (strain ATCC BAA-1101 / DSM 17681 / MLHE-1), this protein is Adenosylcobinamide-GDP ribazoletransferase.